Here is a 159-residue protein sequence, read N- to C-terminus: MIDIGLSKMALIGAVALIVIGPEKLPRVARTVGTLLGKAQRYVADVKAEVNRSMELDELRKMKDTVENAARDVEQTIHTSASDFQKDMEHSLGDASATGSTYGVDQGLSTVVPAYKHPAKNWRLKRGAMPQWYKARAGVRTRVQSGAARVARFRPQKFH.

The chain crosses the membrane as a helical span at residues 1–21 (MIDIGLSKMALIGAVALIVIG).

This sequence belongs to the TatB family. The Tat system comprises two distinct complexes: a TatABC complex, containing multiple copies of TatA, TatB and TatC subunits, and a separate TatA complex, containing only TatA subunits. Substrates initially bind to the TatABC complex, which probably triggers association of the separate TatA complex to form the active translocon.

Its subcellular location is the cell inner membrane. Part of the twin-arginine translocation (Tat) system that transports large folded proteins containing a characteristic twin-arginine motif in their signal peptide across membranes. Together with TatC, TatB is part of a receptor directly interacting with Tat signal peptides. TatB may form an oligomeric binding site that transiently accommodates folded Tat precursor proteins before their translocation. The polypeptide is Sec-independent protein translocase protein TatB (Acidovorax sp. (strain JS42)).